The following is a 285-amino-acid chain: 4-hydroxybenzoate octaprenyltransferase (285 aa).

7 consecutive transmembrane segments (helical) span residues 20–39 (GSYLLLWPTLWALMIAAQGL), 92–112 (ALGLFATLVGVAFLLVLALNW), 137–157 (FPQVVLGAAFGWAIPMAFMAV), 159–179 (EAVPAIAWWLFAINVLWTVAY), 206–226 (YDRLIIGLLQLSVVVMLLGMG), 228–248 (YLGFTLSFYVGVLLASVLFIH), and 260–280 (ACFSAFLNNNYVGMAIALGIA).

This sequence belongs to the UbiA prenyltransferase family. Mg(2+) serves as cofactor.

It localises to the cell inner membrane. It carries out the reaction all-trans-octaprenyl diphosphate + 4-hydroxybenzoate = 4-hydroxy-3-(all-trans-octaprenyl)benzoate + diphosphate. It functions in the pathway cofactor biosynthesis; ubiquinone biosynthesis. Catalyzes the prenylation of para-hydroxybenzoate (PHB) with an all-trans polyprenyl group. Mediates the second step in the final reaction sequence of ubiquinone-8 (UQ-8) biosynthesis, which is the condensation of the polyisoprenoid side chain with PHB, generating the first membrane-bound Q intermediate 3-octaprenyl-4-hydroxybenzoate. The chain is 4-hydroxybenzoate octaprenyltransferase from Pseudoalteromonas atlantica (strain T6c / ATCC BAA-1087).